Here is a 262-residue protein sequence, read N- to C-terminus: tRNA pseudouridine synthase A (262 aa).

Asp-56 functions as the Nucleophile in the catalytic mechanism. Substrate is bound at residue Tyr-114.

It belongs to the tRNA pseudouridine synthase TruA family. Homodimer.

The enzyme catalyses uridine(38/39/40) in tRNA = pseudouridine(38/39/40) in tRNA. Its function is as follows. Formation of pseudouridine at positions 38, 39 and 40 in the anticodon stem and loop of transfer RNAs. This is tRNA pseudouridine synthase A from Lactiplantibacillus plantarum (strain ATCC BAA-793 / NCIMB 8826 / WCFS1) (Lactobacillus plantarum).